Consider the following 60-residue polypeptide: UPF0434 protein Aave_2563 (60 aa).

This sequence belongs to the UPF0434 family.

The sequence is that of UPF0434 protein Aave_2563 from Paracidovorax citrulli (strain AAC00-1) (Acidovorax citrulli).